The chain runs to 182 residues: Ribosome-recycling factor (182 aa).

The disordered stretch occupies residues 136-160 (VKKSEKDGDLSEDQSRDEQEKIQKE).

The protein belongs to the RRF family.

Its subcellular location is the cytoplasm. In terms of biological role, responsible for the release of ribosomes from messenger RNA at the termination of protein biosynthesis. May increase the efficiency of translation by recycling ribosomes from one round of translation to another. The sequence is that of Ribosome-recycling factor from Prochlorococcus marinus (strain NATL1A).